The chain runs to 418 residues: Tyrosine--tRNA ligase (418 aa).

Tyrosine 34 provides a ligand contact to L-tyrosine. Positions 39–48 (PTADSLHLGH) match the 'HIGH' region motif. Tyrosine 169 and glutamine 173 together coordinate L-tyrosine. The 'KMSKS' region signature appears at 229–233 (KFGKS). An ATP-binding site is contributed by lysine 232. The region spanning 352–418 (LNIVDLLVTA…GKKKYFVLTY (67 aa)) is the S4 RNA-binding domain.

This sequence belongs to the class-I aminoacyl-tRNA synthetase family. TyrS type 1 subfamily. In terms of assembly, homodimer.

The protein localises to the cytoplasm. It carries out the reaction tRNA(Tyr) + L-tyrosine + ATP = L-tyrosyl-tRNA(Tyr) + AMP + diphosphate + H(+). Catalyzes the attachment of tyrosine to tRNA(Tyr) in a two-step reaction: tyrosine is first activated by ATP to form Tyr-AMP and then transferred to the acceptor end of tRNA(Tyr). This Streptococcus gordonii (strain Challis / ATCC 35105 / BCRC 15272 / CH1 / DL1 / V288) protein is Tyrosine--tRNA ligase.